Reading from the N-terminus, the 298-residue chain is ATP phosphoribosyltransferase (298 aa).

The protein belongs to the ATP phosphoribosyltransferase family. Long subfamily. Requires Mg(2+) as cofactor.

It localises to the cytoplasm. It carries out the reaction 1-(5-phospho-beta-D-ribosyl)-ATP + diphosphate = 5-phospho-alpha-D-ribose 1-diphosphate + ATP. It functions in the pathway amino-acid biosynthesis; L-histidine biosynthesis; L-histidine from 5-phospho-alpha-D-ribose 1-diphosphate: step 1/9. Its activity is regulated as follows. Feedback inhibited by histidine. In terms of biological role, catalyzes the condensation of ATP and 5-phosphoribose 1-diphosphate to form N'-(5'-phosphoribosyl)-ATP (PR-ATP). Has a crucial role in the pathway because the rate of histidine biosynthesis seems to be controlled primarily by regulation of HisG enzymatic activity. This is ATP phosphoribosyltransferase from Aliivibrio fischeri (strain ATCC 700601 / ES114) (Vibrio fischeri).